Here is a 735-residue protein sequence, read N- to C-terminus: NAD(P)H-quinone oxidoreductase subunit 5, chloroplastic (735 aa).

Helical transmembrane passes span 9–29, 40–60, 89–109, 125–145, 147–167, 184–204, 219–239, 258–278, 280–300, 327–347, 354–374, 396–416, 425–445, 540–560, 600–620, and 714–734; these read WIIPFVPLPIPILIGMGLLLF, WAFPNILLLSIVMIFSLDLSI, IDSLTSIMSILITTVGIFVLI, FAYMSLFNTSMLGLVTSCNLI, IYIFWELVGMCSYLLIGFWFT, IGDFGLLLGILGFYWITGSFE, NEVHFLFVTLCASLLFAGAVA, TPISALIHAATMVAAGIFLVA, LLPLFIVIPYIMNLISLIGII, LGYMMLALGMGSYRAALFHLI, ALLFLASGSIIHSMEAIVGYS, IAFLVGTLSLCGIPPLACFWS, WLYSPIFAIIAWSTAGLTAFY, LFPMLILLLFTLFVGAIAIPF, FSVSIACFGIFTAFLLYKPFY, and FYLLLYLVYVFIFLVISYFIL.

It belongs to the complex I subunit 5 family. NDH is composed of at least 16 different subunits, 5 of which are encoded in the nucleus.

Its subcellular location is the plastid. It is found in the chloroplast thylakoid membrane. The enzyme catalyses a plastoquinone + NADH + (n+1) H(+)(in) = a plastoquinol + NAD(+) + n H(+)(out). It carries out the reaction a plastoquinone + NADPH + (n+1) H(+)(in) = a plastoquinol + NADP(+) + n H(+)(out). In terms of biological role, NDH shuttles electrons from NAD(P)H:plastoquinone, via FMN and iron-sulfur (Fe-S) centers, to quinones in the photosynthetic chain and possibly in a chloroplast respiratory chain. The immediate electron acceptor for the enzyme in this species is believed to be plastoquinone. Couples the redox reaction to proton translocation, and thus conserves the redox energy in a proton gradient. The chain is NAD(P)H-quinone oxidoreductase subunit 5, chloroplastic (ndhF) from Gossypium hirsutum (Upland cotton).